The primary structure comprises 193 residues: CASP-like protein 2U1 (193 aa).

Topologically, residues 1–18 (MAMALALGGGQDAERKVK) are cytoplasmic. Residues 19–39 (VAEVALRALLCGLGALAAALV) traverse the membrane as a helical segment. Over 40 to 61 (ATDTQTRTFFSLQKKASYTDMK) the chain is Extracellular. Residues 62–82 (AMVFLVDAAAVAAGYSLLQLA) traverse the membrane as a helical segment. Residues 83–113 (ARCCGGGAMSSGRGDGGGRGRALSWCVFSCD) are Cytoplasmic-facing. The chain crosses the membrane as a helical span at residues 114–134 (QALAYVLLAAVAAALQASVVA). Over 135 to 156 (KRGQPELQWMGICALYGAFCRQ) the chain is Extracellular. A helical transmembrane segment spans residues 157–177 (AGAGLATAVVAGLAAVLLAFL). At 178-193 (SAFNLFRLYGSGGTKS) the chain is on the cytoplasmic side.

The protein belongs to the Casparian strip membrane proteins (CASP) family. Homodimer and heterodimers.

It localises to the cell membrane. This Sorghum bicolor (Sorghum) protein is CASP-like protein 2U1.